Consider the following 242-residue polypeptide: ATP synthase subunit a (242 aa).

Transmembrane regions (helical) follow at residues 29–49, 84–104, 114–134, 140–160, 181–201, and 203–223; these read SSIY…LAFY, FIPL…LGMT, IIVT…VGFV, FLTL…IIVI, MAGH…MIYL, and FLPI…AILQ.

The protein belongs to the ATPase A chain family. F-type ATPases have 2 components, CF(1) - the catalytic core - and CF(0) - the membrane proton channel. CF(1) has five subunits: alpha(3), beta(3), gamma(1), delta(1), epsilon(1). CF(0) has three main subunits: a(1), b(2) and c(9-12). The alpha and beta chains form an alternating ring which encloses part of the gamma chain. CF(1) is attached to CF(0) by a central stalk formed by the gamma and epsilon chains, while a peripheral stalk is formed by the delta and b chains.

Its subcellular location is the cell inner membrane. In terms of biological role, key component of the proton channel; it plays a direct role in the translocation of protons across the membrane. This is ATP synthase subunit a from Rickettsia peacockii (strain Rustic).